The primary structure comprises 258 residues: Imidazole glycerol phosphate synthase subunit HisF (258 aa).

Active-site residues include D11 and D130.

Belongs to the HisA/HisF family. As to quaternary structure, heterodimer of HisH and HisF.

It is found in the cytoplasm. It catalyses the reaction 5-[(5-phospho-1-deoxy-D-ribulos-1-ylimino)methylamino]-1-(5-phospho-beta-D-ribosyl)imidazole-4-carboxamide + L-glutamine = D-erythro-1-(imidazol-4-yl)glycerol 3-phosphate + 5-amino-1-(5-phospho-beta-D-ribosyl)imidazole-4-carboxamide + L-glutamate + H(+). Its pathway is amino-acid biosynthesis; L-histidine biosynthesis; L-histidine from 5-phospho-alpha-D-ribose 1-diphosphate: step 5/9. In terms of biological role, IGPS catalyzes the conversion of PRFAR and glutamine to IGP, AICAR and glutamate. The HisF subunit catalyzes the cyclization activity that produces IGP and AICAR from PRFAR using the ammonia provided by the HisH subunit. In Baumannia cicadellinicola subsp. Homalodisca coagulata, this protein is Imidazole glycerol phosphate synthase subunit HisF.